A 233-amino-acid chain; its full sequence is Putative N-acetylmannosamine-6-phosphate 2-epimerase (233 aa).

It belongs to the NanE family.

It catalyses the reaction an N-acyl-D-glucosamine 6-phosphate = an N-acyl-D-mannosamine 6-phosphate. It functions in the pathway amino-sugar metabolism; N-acetylneuraminate degradation; D-fructose 6-phosphate from N-acetylneuraminate: step 3/5. In terms of biological role, converts N-acetylmannosamine-6-phosphate (ManNAc-6-P) to N-acetylglucosamine-6-phosphate (GlcNAc-6-P). This Yersinia pseudotuberculosis serotype O:1b (strain IP 31758) protein is Putative N-acetylmannosamine-6-phosphate 2-epimerase.